The following is a 360-amino-acid chain: Putative transcription factor A494R (360 aa).

A zinc finger spans residues 153–175 (CTCGGQMELWVNSTQSDLVCNEC).

It belongs to the nucleo-cytoplasmic large DNA viruses (NCLDVs) VLTF-3 family.

Functionally, putative transcription factor. This Paramecium bursaria Chlorella virus 1 (PBCV-1) protein is Putative transcription factor A494R.